The sequence spans 130 residues: MARPTKKTGTKKQKKNVPNGIAHIQSTFNNTIVTIADTKGDVVSWASAGSSGFKGAKKGTPFAAQTAADAAARRAIDQGMRQIEVMVSGPGAGRETAIRALQGAGLEITLIRDVTPIPHNGCRPPKRRRV.

Belongs to the universal ribosomal protein uS11 family. As to quaternary structure, part of the 30S ribosomal subunit. Interacts with proteins S7 and S18. Binds to IF-3.

Functionally, located on the platform of the 30S subunit, it bridges several disparate RNA helices of the 16S rRNA. Forms part of the Shine-Dalgarno cleft in the 70S ribosome. The chain is Small ribosomal subunit protein uS11 from Rippkaea orientalis (strain PCC 8801 / RF-1) (Cyanothece sp. (strain PCC 8801)).